The following is a 245-amino-acid chain: Uridylate kinase (245 aa).

20-23 (KVSG) contributes to the ATP binding site. G62 provides a ligand contact to UMP. Positions 63 and 67 each coordinate ATP. Residues D81 and 142–149 (IGSPFFTT) each bind UMP. ATP contacts are provided by T169, Q170, Y175, and D178.

Belongs to the UMP kinase family. In terms of assembly, homohexamer.

The protein localises to the cytoplasm. It carries out the reaction UMP + ATP = UDP + ADP. It functions in the pathway pyrimidine metabolism; CTP biosynthesis via de novo pathway; UDP from UMP (UMPK route): step 1/1. With respect to regulation, inhibited by UTP. Functionally, catalyzes the reversible phosphorylation of UMP to UDP. This Anaplasma marginale (strain St. Maries) protein is Uridylate kinase.